We begin with the raw amino-acid sequence, 693 residues long: MKTHRLNMTASLLIGISAFAVQAFASEPTVVPEQPPFPAQGKITYVSRDSILEFKALREYREPEWVTEKFVKAGKLPPVAERLPKEPMVFKAGNMPDGMGVYGDVMRHVIGGRPEGWNYSAGQTQGWGGIDIGMFECLTRTAPLFQVEADDMEPLPNLAKSWDWSEDGRKLTMHLIEGAKWSDGDPFDADDVMFYWEDNVLDSSVSPLNGATPETFGEGTTLKKIDQYTVEWTFKEAFPRQHLFAMAYGTFCPGPSHILKTKHPKYAGTTYNEYKNGFPAEYMNLPVMGAWVPVAYRPDDIIVLRRNPYYWKVDEAGNQLPYLNELHYKLSTWADRDVQAIAGSGDISNLEQPENFVESLKRAANESAPARLAFGPRVIGYNMHMNFSGNGWGDPDERAKAVRELNRNLDFRKAVTMAVDRKKLGEALVKGPFTAIYPGGLSSGTSFYDRNSTIYYPHDLEGAKVLLEKVGLKDTDGNGFVNFPAGKLGGRDVEIVLLVNSDYSTDRNLAEGMVGQMEKLGLRVVLNALDGKQRDAANYAGRFDWMIHRNTAEFASVVQNTPQLAPTGPRTSWHHRAPEGGEVDVMPHEQELVDIVNKFIASNDNDERTELMKQYQKVATTNVDTVGLTEYPGALIINKRFSNIPPGAPIFMFNWAEDTIIRERVFVAADKQGDYELYPEQLPGKPGESGPIN.

The signal sequence occupies residues 1–20; it reads MKTHRLNMTASLLIGISAFA.

This sequence belongs to the bacterial solute-binding protein 5 family.

The protein resides in the periplasm. Its function is as follows. Involved in the transport of alpha-galactosides. Required for the utilization of raffinose and melibiose. Probably acts as a periplasmic substrate-binding protein for a transport system. The polypeptide is Periplasmic alpha-galactoside-binding protein (Rhizobium meliloti (strain 1021) (Ensifer meliloti)).